Consider the following 434-residue polypeptide: NADH-quinone oxidoreductase subunit F 1 (434 aa).

An NAD(+)-binding site is contributed by 54–63 (GRGGAGFPTG). 166-213 (GAGAYICGEETALLESLEGKKGQPRLKPPFPANMGLYGCPTTVNNVES) serves as a coordination point for FMN. [4Fe-4S] cluster is bound by residues Cys345, Cys348, Cys351, and Cys391.

Belongs to the complex I 51 kDa subunit family. FMN serves as cofactor. Requires [4Fe-4S] cluster as cofactor.

The enzyme catalyses a quinone + NADH + 5 H(+)(in) = a quinol + NAD(+) + 4 H(+)(out). Functionally, NDH-1 shuttles electrons from NADH, via FMN and iron-sulfur (Fe-S) centers, to quinones in the respiratory chain. The immediate electron acceptor for the enzyme in this species is believed to be ubiquinone. Couples the redox reaction to proton translocation (for every two electrons transferred, four hydrogen ions are translocated across the cytoplasmic membrane), and thus conserves the redox energy in a proton gradient. The polypeptide is NADH-quinone oxidoreductase subunit F 1 (nuoF1) (Rhizobium meliloti (strain 1021) (Ensifer meliloti)).